A 271-amino-acid chain; its full sequence is Tryptophan synthase alpha chain (271 aa).

Active-site proton acceptor residues include Glu-49 and Asp-60.

Belongs to the TrpA family. Tetramer of two alpha and two beta chains.

It catalyses the reaction (1S,2R)-1-C-(indol-3-yl)glycerol 3-phosphate + L-serine = D-glyceraldehyde 3-phosphate + L-tryptophan + H2O. It functions in the pathway amino-acid biosynthesis; L-tryptophan biosynthesis; L-tryptophan from chorismate: step 5/5. Functionally, the alpha subunit is responsible for the aldol cleavage of indoleglycerol phosphate to indole and glyceraldehyde 3-phosphate. This is Tryptophan synthase alpha chain from Burkholderia cenocepacia (strain HI2424).